The chain runs to 308 residues: MSTIDKEKFQFVKRDDFASETIDAPAYSYWKSVFKQFMKKKSTVVMLGILVAIILISFIYPMFSKFDFNDVSKVNDFSVRYIKPNAEHWFGTDSNGKSLFDGVWFGARNSILISVIATVINLVIGVFVGGIWGISKSVDRVMMEVYNVISNIPPLLIVIVLTYSIGAGFWNLIFAMSVTTWIGIAFMIRVQILRYRDLEYNLASRTLGTPTLKIVAKNIMPQLVSVIVTTMTQMLPSFISYEAFLSFFGLGLPITVPSLGRLISDYSQNVTTNAYLFWIPLTTLVLVSLSLFVVGQNLADASDPRTHR.

Transmembrane regions (helical) follow at residues threonine 43–phenylalanine 63, isoleucine 111–isoleucine 131, valine 145–alanine 167, asparagine 171–leucine 193, methionine 234–isoleucine 254, and alanine 274–valine 294. The region spanning alanine 107–glycine 295 is the ABC transmembrane type-1 domain.

It belongs to the binding-protein-dependent transport system permease family. OppBC subfamily.

It localises to the cell membrane. Its function is as follows. Part of the binding-protein-dependent transport system for oligopeptides; probably responsible for the translocation of the substrate across the membrane. In Streptococcus pneumoniae (strain ATCC BAA-255 / R6), this protein is Oligopeptide transport system permease protein AmiD (amiD).